The primary structure comprises 38 residues: Photosystem II reaction center protein L (38 aa).

Residues 17–37 (SLYWGLLCIFVLAILFSSYFF) form a helical membrane-spanning segment.

Belongs to the PsbL family. In terms of assembly, PSII is composed of 1 copy each of membrane proteins PsbA, PsbB, PsbC, PsbD, PsbE, PsbF, PsbH, PsbI, PsbJ, PsbK, PsbL, PsbM, PsbT, PsbX, PsbY, PsbZ, Psb30/Ycf12, at least 3 peripheral proteins of the oxygen-evolving complex and a large number of cofactors. It forms dimeric complexes.

It localises to the plastid. The protein localises to the chloroplast thylakoid membrane. One of the components of the core complex of photosystem II (PSII). PSII is a light-driven water:plastoquinone oxidoreductase that uses light energy to abstract electrons from H(2)O, generating O(2) and a proton gradient subsequently used for ATP formation. It consists of a core antenna complex that captures photons, and an electron transfer chain that converts photonic excitation into a charge separation. This subunit is found at the monomer-monomer interface and is required for correct PSII assembly and/or dimerization. The chain is Photosystem II reaction center protein L from Cyanidioschyzon merolae (strain NIES-3377 / 10D) (Unicellular red alga).